Reading from the N-terminus, the 211-residue chain is Dephospho-CoA kinase (211 aa).

Positions 3–206 (VLGLTGGIGS…PGMKGPDPHA (204 aa)) constitute a DPCK domain. An ATP-binding site is contributed by 11–16 (GSGKSI).

This sequence belongs to the CoaE family.

It localises to the cytoplasm. The enzyme catalyses 3'-dephospho-CoA + ATP = ADP + CoA + H(+). The protein operates within cofactor biosynthesis; coenzyme A biosynthesis; CoA from (R)-pantothenate: step 5/5. Its function is as follows. Catalyzes the phosphorylation of the 3'-hydroxyl group of dephosphocoenzyme A to form coenzyme A. The sequence is that of Dephospho-CoA kinase from Syntrophotalea carbinolica (strain DSM 2380 / NBRC 103641 / GraBd1) (Pelobacter carbinolicus).